The primary structure comprises 124 residues: Aspartate 1-decarboxylase (124 aa).

The active-site Schiff-base intermediate with substrate; via pyruvic acid is the Ser21. Ser21 is modified (pyruvic acid (Ser)). Thr53 contributes to the substrate binding site. The active-site Proton donor is Tyr54. 69-71 (GAA) is a binding site for substrate.

The protein belongs to the PanD family. In terms of assembly, heterooctamer of four alpha and four beta subunits. Pyruvate serves as cofactor. Is synthesized initially as an inactive proenzyme, which is activated by self-cleavage at a specific serine bond to produce a beta-subunit with a hydroxyl group at its C-terminus and an alpha-subunit with a pyruvoyl group at its N-terminus.

It is found in the cytoplasm. The catalysed reaction is L-aspartate + H(+) = beta-alanine + CO2. Its pathway is cofactor biosynthesis; (R)-pantothenate biosynthesis; beta-alanine from L-aspartate: step 1/1. In terms of biological role, catalyzes the pyruvoyl-dependent decarboxylation of aspartate to produce beta-alanine. In Dehalococcoides mccartyi (strain ATCC BAA-2266 / KCTC 15142 / 195) (Dehalococcoides ethenogenes (strain 195)), this protein is Aspartate 1-decarboxylase.